The sequence spans 149 residues: Leghemoglobin (149 aa).

The Globin domain maps to 3-147 (AFSEKQESLV…LAAAIKKAMG (145 aa)). Nitrated tyrosine is present on tyrosine 31. A heme b-binding site is contributed by serine 46. Phosphoserine is present on serine 46. O2 is bound at residue histidine 62. Heme b-binding residues include lysine 65, histidine 94, and lysine 97. The residue at position 135 (tyrosine 135) is a Nitrated tyrosine.

It belongs to the plant globin family. In terms of assembly, monomer. Post-translationally, nitrated in effective nodules and particularly in hypoxic conditions; this mechanism may play a protective role in the symbiosis by buffering toxic peroxynitrite NO(2)(-). Nitration level decrease during nodule senescence. In terms of processing, phosphorylation at Ser-46 disrupts the molecular environment of its porphyrin ring oxygen binding pocket, thus leading to a reduced oxygen consumption and to the delivery of oxygen O(2) to symbiosomes. In terms of tissue distribution, root nodules.

It localises to the cytoplasm. Its subcellular location is the cytosol. The protein resides in the nucleus. Leghemoglobin that reversibly binds oxygen O(2) through a pentacoordinated heme iron. In root nodules, facilitates the diffusion of oxygen to the bacteroids while preventing the bacterial nitrogenase from being inactivated by buffering dioxygen, nitric oxide and carbon monoxide, and promoting the formation of reactive oxygen species (ROS, e.g. H(2)O(2)). This role is essential for symbiotic nitrogen fixation (SNF). The sequence is that of Leghemoglobin from Canavalia lineata (Beach bean).